Reading from the N-terminus, the 188-residue chain is Ribosome-recycling factor (188 aa).

It belongs to the RRF family.

The protein localises to the cytoplasm. Its function is as follows. Responsible for the release of ribosomes from messenger RNA at the termination of protein biosynthesis. May increase the efficiency of translation by recycling ribosomes from one round of translation to another. In Bradyrhizobium diazoefficiens (strain JCM 10833 / BCRC 13528 / IAM 13628 / NBRC 14792 / USDA 110), this protein is Ribosome-recycling factor.